Consider the following 174-residue polypeptide: RPERCGSAMRKAEAEKCARRNGRFNASKCRCTSAGKPSRNSEPSKGSKPRPEKPSKGSKPRPEKPSKGSKPKPEKPSKGSKPRPERCGSAMRKAEAEKCARRNGRFNASKCRCTSAGKPSRKSEPSKGSKPRPEKPSKESKPRPEKPSKGSKPRPEKPSKGSKPRPEGCGSAMR.

The interval 28–174 is disordered; it reads KCRCTSAGKP…RPEGCGSAMR (147 aa). Tandem repeats lie at residues 42–52, 53–63, 64–74, 75–85, 124–134, 135–145, 146–156, and 157–167. 2 4 X 11 AA tandem repeats regions span residues 42 to 85 and 124 to 167; these read EPSK…PRPE. 2 stretches are compositionally biased toward basic and acidic residues: residues 49–100 and 121–159; these read PRPE…EKCA and RKSE…EKPS.

In terms of tissue distribution, salivary gland.

It is found in the secreted. Functionally, used by the larvae to construct a supramolecular structure, the larval tube. The protein is Balbiani ring protein 1 (BR1) of Chironomus tentans (Midge).